We begin with the raw amino-acid sequence, 366 residues long: Glutamate 5-kinase (366 aa).

K17 provides a ligand contact to ATP. The substrate site is built by S57, D144, and N156. ATP contacts are provided by residues 176 to 177 and 216 to 222; these read SD and TGGMASK. One can recognise a PUA domain in the interval 278 to 352; sequence QGILHIDEGA…GKSTQELPAE (75 aa).

Belongs to the glutamate 5-kinase family.

It localises to the cytoplasm. It catalyses the reaction L-glutamate + ATP = L-glutamyl 5-phosphate + ADP. The protein operates within amino-acid biosynthesis; L-proline biosynthesis; L-glutamate 5-semialdehyde from L-glutamate: step 1/2. Catalyzes the transfer of a phosphate group to glutamate to form L-glutamate 5-phosphate. The protein is Glutamate 5-kinase of Rhodococcus opacus (strain B4).